The sequence spans 498 residues: Ribulose bisphosphate carboxylase large chain (498 aa).

The propeptide occupies 1–2 (MS). P3 is subject to N-acetylproline. K14 carries the post-translational modification N6,N6,N6-trimethyllysine. N123 and T173 together coordinate substrate. Residue K175 is the Proton acceptor of the active site. Position 177 (K177) interacts with substrate. Mg(2+)-binding residues include K201, D203, and E204. N6-carboxylysine is present on K201. H294 serves as the catalytic Proton acceptor. R295, H327, and S379 together coordinate substrate. The interval 473 to 498 (DTLDPNDKKQRDNEDTLADKFFGDKG) is disordered.

The protein belongs to the RuBisCO large chain family. Type I subfamily. In terms of assembly, heterohexadecamer of 8 large chains and 8 small chains; disulfide-linked. The disulfide link is formed within the large subunit homodimers. The cofactor is Mg(2+). Post-translationally, the disulfide bond which can form in the large chain dimeric partners within the hexadecamer appears to be associated with oxidative stress and protein turnover.

It localises to the plastid. It carries out the reaction 2 (2R)-3-phosphoglycerate + 2 H(+) = D-ribulose 1,5-bisphosphate + CO2 + H2O. It catalyses the reaction D-ribulose 1,5-bisphosphate + O2 = 2-phosphoglycolate + (2R)-3-phosphoglycerate + 2 H(+). RuBisCO catalyzes two reactions: the carboxylation of D-ribulose 1,5-bisphosphate, the primary event in carbon dioxide fixation, as well as the oxidative fragmentation of the pentose substrate in the photorespiration process. Both reactions occur simultaneously and in competition at the same active site. The polypeptide is Ribulose bisphosphate carboxylase large chain (Cuscuta exaltata (Tall dodder)).